The following is a 1845-amino-acid chain: MEPAERAGGRDPLEPGGRPGPDPQGFVPQKEIVYNKLLPYAERLDAESDLQLAQIKSNLGRAVQLQELWPGGLFWTRKLSTYHRLYGRKFSKEDHVLFIKLLYELVSIPKLEISMMQGFARLLINLLKKKELLSRDDLELPWRPLYDMVERILYSKTEHLGLNWFPNSVENVLKTLVKSCRPYFPADATAEMLEEWRPLMCPFDVTMQKAITYFEIFLPTSLPPELHHKGFKLWFDELIGLWVSVQNLPQWEGQLVNLFARLATDNIGYIDWDPYVPKVFTRILRSLNLPVGSSQVLVPRFLTNAYDIGHAVVWITAMMGGPSKLVQKHLAGLFNSITSFYHPSNNGRWLNKLMKLLQRLPNSVVRRLHRERYKKPSWLTPVPDSHKLTDQDVTDFVQCIIQPVLLAMFSKTGSLEAAQALQNLALMRPELVIPPVLERTYPALETLTEPHQLTATLSCVIGVARSLVSGGRWFPEGPTHMLPLLMRALPGVDPNDFSKCMITFQFIATFSTLVPLVDCSSVLQERNDLTEVERELCSATAEFEDFVLQFMDRCFGLIESSTLEQTREETETEKMTHLESLVELGLSSTFSTILTQCSKEIFMVALQKVFNFSISHIFETRVAGRMVADMCRAAVKCCPEESLKLFVPHCCGVITQLTMNDDVLNEEELDKELLWNLQLLSEITRVDGKKLLLYREQLVKILQRTLHLTCKQGYTLSCNLLHHLLRSTTLIYPTEYCSVPGGFDKPPSEYFPIKDWGKPGDLWNLGIQWHVPSSEEVAFAFYLLDSFLQPELIKLQRCGDGELEMSRDDVLQSLTIVHNCLIGSGNLLPPLKGEPVTNLVPSMVSLEETKLYTGLEYEIDLSRENYRETIARVIRKLLNHILNNSEDDTKSLFLIIKIIGDLLQFQGSHKHEFDSRWKSFNLVKKSMENRLHGKKQHIRALLIDRVMLQHELRTLTVEGCEYKKIHQEMIRDLLRLSTSSYSQVRNKAQQTFFAALGAYNFCCRDIIPLVLGFLRPDRQDVTQQQFKGALYCLLGNHSGVCLANLHDWDCIVQTWPAIVSSGLSQAMSLEKPSIVRLFDDLAEKIHRQYETIGLDFTVSKSCVGIAELLQQSKNPSINQTMLSSEEIKEGLKRQQGRNVDALRNYENLVNTLLDGVEQRNLPWKFEHIGIGLLSLLLRDDRVLPLRAIRFFVENLNHDAIVVRKMAISAVAGILKQLKRTHKKLTISPYEISGYPKPTQIVAGDRPDNHWLHYDSKSIPRTKKEWESSCFVEKTHWGYYTWPQNMVVYAGVEEQPKLGRSREDLTEAEQIIFDHFSDPKFVEQLITFLSLEDRKGKDKFNPRRFCLFKGIFRNFDDAFLPVLKPHLERLVADSHESTQRCVAEIIAGLIRGSKHWTFEKVEKLWELLCPLLRTALSNITVETYNDWGTCIATSCESRDPRKLHWLFELLLESPLSGEGGSFVDACRLYVLQGGLAQQEWRVPELLHRLLKYLEPKLTQVYKNVRERIGSVLTYIFMIDVSLPNTAPTASPRVPEFTARILEKLKPLMDVDEEIQNHVMEENGIGEEDERTQGIKLLKTILKWLMASAGRSFSTAVAEQLQLLPLFFKIAPVENDNSYDELKRDAKLCLSLMSQGLLYPHQVPLVLQVLNQTARSSSWHARYTVLTYLQTMVFYNLFIFLNNEDAVKDIRWLVISLLEDEQLEVREMAATTLSGLLQCNFLTMDSPMQIHFEQLCKTKLPKKRKRDPGFVGDTIPSAELVKRHAGVLGLGACVLSSPYDVPTWMPQLLMNLSAHLNDPQPIEMTVKKTLSNFRRTHHDNWQEHKQQFTDDQLLVLTDLLVSPCYYA.

The span at 1–13 (MEPAERAGGRDPL) shows a compositional bias: basic and acidic residues. The disordered stretch occupies residues 1–26 (MEPAERAGGRDPLEPGGRPGPDPQGF). HEAT repeat units lie at residues 475 to 519 (PEGP…LVDC) and 1000 to 1039 (NFCCRDIIPLVLGFLRPDRQDVTQQQFKGALYCLLGNHSG). Serine 1123 is subject to Phosphoserine. HEAT repeat units lie at residues 1181-1219 (RVLPLRAIRFFVENLNHDAIVVRKMAISAVAGILKQLKR) and 1356-1394 (DAFLPVLKPHLERLVADSHESTQRCVAEIIAGLIRGSKH). A Phosphoserine modification is found at serine 1616. HEAT repeat units follow at residues 1638-1676 (PHQVPLVLQVLNQTARSSSWHARYTVLTYLQTMVFYNLF) and 1682-1720 (EDAVKDIRWLVISLLEDEQLEVREMAATTLSGLLQCNFL). The segment at 1652–1740 (ARSSSWHARY…EQLCKTKLPK (89 aa)) is bromodomain-like (BRDL).

The protein belongs to the BLM10 family. Homodimer. Component of the spermatoproteasome, a form of the proteasome specifically found in testis. Interacts with the 20S and 26S proteasomes. Post-translationally, phosphorylated.

It is found in the cytoplasm. It localises to the cytosol. The protein resides in the nucleus. The protein localises to the nucleus speckle. Associated component of the proteasome that specifically recognizes acetylated histones and promotes ATP- and ubiquitin-independent degradation of core histones during spermatogenesis and DNA damage response. Recognizes and binds acetylated histones via its bromodomain-like (BRDL) region and activates the proteasome by opening the gated channel for substrate entry. Binds to the core proteasome via its C-terminus, which occupies the same binding sites as the proteasomal ATPases, opening the closed structure of the proteasome via an active gating mechanism. Component of the spermatoproteasome, a form of the proteasome specifically found in testis: binds to acetylated histones and promotes degradation of histones, thereby participating actively to the exchange of histones during spermatogenesis. Also involved in DNA damage response in somatic cells, by promoting degradation of histones following DNA double-strand breaks. This Bos taurus (Bovine) protein is Proteasome activator complex subunit 4 (PSME4).